The chain runs to 225 residues: GTP-binding nuclear protein Ran (225 aa).

The region spanning 8 to 172 (VVAEFKLVLV…LWILRKLTGD (165 aa)) is the Small GTPase Ran-type domain. 19–26 (DGGVGKTT) contacts GTP. Positions 38–46 (KRYIATQGV) are switch-I. GTP is bound by residues Gly69, 123–126 (NKVD), and 151–153 (SAK). The segment at 69-85 (GQEKLGGLREGYYIGAN) is switch-II.

Belongs to the small GTPase superfamily. Ran family. Monomer. Found in a nuclear export complex with RanGTP, exportin and pre-miRNA.

It is found in the nucleus. In terms of biological role, GTP-binding protein involved in nucleocytoplasmic transport. Required for the import of protein into the nucleus and also for RNA export. Involved in chromatin condensation and control of cell cycle. The protein is GTP-binding nuclear protein Ran of Tetrahymena thermophila.